The primary structure comprises 721 residues: Choline O-acetyltransferase (721 aa).

Histidine 419 (proton acceptor) is an active-site residue. Residues 496–508, serine 534, and glutamine 656 contribute to the CoA site; that span reads GKTFIKSCQVSPD.

It belongs to the carnitine/choline acetyltransferase family. In terms of assembly, the 54 kDa and 13 kDa chains exist as a heterodimer. Post-translationally, the N-terminus of choline O-acetyltransferase 67 kDa and 54 kDa chains are blocked.

It carries out the reaction choline + acetyl-CoA = acetylcholine + CoA. In terms of biological role, catalyzes the reversible synthesis of acetylcholine (ACh) from acetyl CoA and choline at cholinergic synapses. The chain is Choline O-acetyltransferase from Drosophila melanogaster (Fruit fly).